Consider the following 263-residue polypeptide: Putative TATA-binding protein pB263R (263 aa).

The protein belongs to the asfivirus B263R family.

Putative TATA-binding protein. This is Putative TATA-binding protein pB263R from Ornithodoros (relapsing fever ticks).